A 362-amino-acid chain; its full sequence is Chorismate synthase (362 aa).

Residue arginine 47 coordinates NADP(+). Residues 124 to 126 (RAS), glycine 286, 301 to 305 (KPTAT), and arginine 327 each bind FMN.

The protein belongs to the chorismate synthase family. As to quaternary structure, homotetramer. The cofactor is FMNH2.

It carries out the reaction 5-O-(1-carboxyvinyl)-3-phosphoshikimate = chorismate + phosphate. It functions in the pathway metabolic intermediate biosynthesis; chorismate biosynthesis; chorismate from D-erythrose 4-phosphate and phosphoenolpyruvate: step 7/7. Catalyzes the anti-1,4-elimination of the C-3 phosphate and the C-6 proR hydrogen from 5-enolpyruvylshikimate-3-phosphate (EPSP) to yield chorismate, which is the branch point compound that serves as the starting substrate for the three terminal pathways of aromatic amino acid biosynthesis. This reaction introduces a second double bond into the aromatic ring system. In Prochlorococcus marinus (strain MIT 9303), this protein is Chorismate synthase.